A 248-amino-acid chain; its full sequence is Triosephosphate isomerase (248 aa).

9–11 is a substrate binding site; sequence NWK. The active-site Electrophile is His94. Residue Glu166 is the Proton acceptor of the active site. Substrate contacts are provided by residues Gly172, Ser211, and 232-233; that span reads GG.

Belongs to the triosephosphate isomerase family. Homodimer.

It is found in the cytoplasm. It catalyses the reaction D-glyceraldehyde 3-phosphate = dihydroxyacetone phosphate. It functions in the pathway carbohydrate biosynthesis; gluconeogenesis. The protein operates within carbohydrate degradation; glycolysis; D-glyceraldehyde 3-phosphate from glycerone phosphate: step 1/1. In terms of biological role, involved in the gluconeogenesis. Catalyzes stereospecifically the conversion of dihydroxyacetone phosphate (DHAP) to D-glyceraldehyde-3-phosphate (G3P). This Herminiimonas arsenicoxydans protein is Triosephosphate isomerase.